The following is a 291-amino-acid chain: MTWPLPDRLSINSLSGTPAVDLSSFTDFLRRQAPELLPASISGGAPLAGGDAQLPHGTTIVALKYPGGVVMAGDRRSTQGNMISGRDVRKVYITDDYTATGIAGTAAVAVEFARLYAVELEHYEKLEGVPLTFAGKINRLAIMVRGNLAAAMQGLLALPLLAGYDIHASDPQSAGRIVSFDAAGGWNIEEEGYQAVGSGSLFAKSSMKKLYSQVTDGDSGLRVAVEALYDAADDDSATGGPDLVRGIFPTAVIIDADGAVDVPESRIAELARAIIESRSGADTFGSDGGEK.

The propeptide at 1 to 57 is removed in mature form; by autocatalysis; that stretch reads MTWPLPDRLSINSLSGTPAVDLSSFTDFLRRQAPELLPASISGGAPLAGGDAQLPHG. T58 serves as the catalytic Nucleophile.

This sequence belongs to the peptidase T1B family. In terms of assembly, the 20S proteasome core is composed of 14 alpha and 14 beta subunits that assemble into four stacked heptameric rings, resulting in a barrel-shaped structure. The two inner rings, each composed of seven catalytic beta subunits, are sandwiched by two outer rings, each composed of seven alpha subunits. The catalytic chamber with the active sites is on the inside of the barrel. Has a gated structure, the ends of the cylinder being occluded by the N-termini of the alpha-subunits. Is capped by the proteasome-associated ATPase, ARC.

The protein resides in the cytoplasm. It catalyses the reaction Cleavage of peptide bonds with very broad specificity.. It participates in protein degradation; proteasomal Pup-dependent pathway. Its activity is regulated as follows. The formation of the proteasomal ATPase ARC-20S proteasome complex, likely via the docking of the C-termini of ARC into the intersubunit pockets in the alpha-rings, may trigger opening of the gate for substrate entry. Interconversion between the open-gate and close-gate conformations leads to a dynamic regulation of the 20S proteasome proteolysis activity. In terms of biological role, component of the proteasome core, a large protease complex with broad specificity involved in protein degradation. The polypeptide is Proteasome subunit beta (Mycobacterium tuberculosis (strain ATCC 25177 / H37Ra)).